A 513-amino-acid polypeptide reads, in one-letter code: ATP synthase subunit alpha (513 aa).

Residue 169–176 coordinates ATP; the sequence is GDRQTGKT.

This sequence belongs to the ATPase alpha/beta chains family. As to quaternary structure, F-type ATPases have 2 components, CF(1) - the catalytic core - and CF(0) - the membrane proton channel. CF(1) has five subunits: alpha(3), beta(3), gamma(1), delta(1), epsilon(1). CF(0) has three main subunits: a(1), b(2) and c(9-12). The alpha and beta chains form an alternating ring which encloses part of the gamma chain. CF(1) is attached to CF(0) by a central stalk formed by the gamma and epsilon chains, while a peripheral stalk is formed by the delta and b chains.

It localises to the cell inner membrane. It catalyses the reaction ATP + H2O + 4 H(+)(in) = ADP + phosphate + 5 H(+)(out). Its function is as follows. Produces ATP from ADP in the presence of a proton gradient across the membrane. The alpha chain is a regulatory subunit. The polypeptide is ATP synthase subunit alpha (Salmonella agona (strain SL483)).